The primary structure comprises 222 residues: Methylthioribulose-1-phosphate dehydratase (222 aa).

2 residues coordinate Zn(2+): histidine 94 and histidine 96.

It belongs to the aldolase class II family. MtnB subfamily. It depends on Zn(2+) as a cofactor.

The catalysed reaction is 5-(methylsulfanyl)-D-ribulose 1-phosphate = 5-methylsulfanyl-2,3-dioxopentyl phosphate + H2O. Its pathway is amino-acid biosynthesis; L-methionine biosynthesis via salvage pathway; L-methionine from S-methyl-5-thio-alpha-D-ribose 1-phosphate: step 2/6. In terms of biological role, catalyzes the dehydration of methylthioribulose-1-phosphate (MTRu-1-P) into 2,3-diketo-5-methylthiopentyl-1-phosphate (DK-MTP-1-P). In Yersinia pseudotuberculosis serotype O:1b (strain IP 31758), this protein is Methylthioribulose-1-phosphate dehydratase.